A 337-amino-acid polypeptide reads, in one-letter code: MEEIERIREIERTEQEKIKERIKLQREKEKEEELDKYTVECPECGSRALVRDYERAELVCSECGLVIDENFIDQGPEWRAFDHDQRMKRSRVGAPMTYTIHDKGLSTMIDWRNRDSYGKTISSKNRAQLYRLRKWQRRIRVSNATERNLAFALSELDRMASALGLSRNVRETAAVIYRRAVEKNLIRGRSIEGVAAAALYAACRQCNVPRTLDEIAEVSRVSRKEIGRTYRFVSRELSLKLMPTSPIDYIPRFCSGLNLKGDVQAKGIEILRQAAEKELTSGRGPTGVAAAAIYIASILCNDRRTQREVADVAGVTEVTIRNRYKELAEELNIEIIL.

The TFIIB-type zinc-finger motif lies at Y37 to D68. The Zn(2+) site is built by C41, C44, C60, and C63. 2 tandem repeats follow at residues S154–L237 and D248–E329.

The protein belongs to the TFIIB family.

Stabilizes TBP binding to an archaeal box-A promoter. Also responsible for recruiting RNA polymerase II to the pre-initiation complex (DNA-TBP-TFIIB). In Methanothrix thermoacetophila (strain DSM 6194 / JCM 14653 / NBRC 101360 / PT) (Methanosaeta thermophila), this protein is Transcription initiation factor IIB.